The primary structure comprises 254 residues: Anamorsin homolog (254 aa).

An N-terminal SAM-like domain region spans residues 4 to 132 (VQENNHVLYI…EIGSAAKLSL (129 aa)). A linker region spans residues 132–167 (LGGNKAKVAAVWKLDVDDDDDERIDEDELLDEEDKV). The [2Fe-2S] cluster site is built by C177, C186, C189, and C191. Residues 177–191 (CGTTGKRKACKDCSC) are fe-S binding site A. [4Fe-4S] cluster contacts are provided by C215, C218, C226, and C229. Short sequence motifs (cx2C motif) lie at residues 215–218 (CGSC) and 226–229 (CATC). The interval 215–229 (CGSCYLGDAFRCATC) is fe-S binding site B.

This sequence belongs to the anamorsin family. In terms of assembly, monomer. [2Fe-2S] cluster is required as a cofactor. Requires [4Fe-4S] cluster as cofactor.

It localises to the cytoplasm. The protein localises to the mitochondrion intermembrane space. Its function is as follows. Component of the cytosolic iron-sulfur (Fe-S) protein assembly (CIA) machinery. Required for the maturation of extramitochondrial Fe-S proteins. Part of an electron transfer chain functioning in an early step of cytosolic Fe-S biogenesis, facilitating the de novo assembly of a [4Fe-4S] cluster on the cytosolic Fe-S scaffold complex. Electrons are transferred from NADPH via a FAD- and FMN-containing diflavin oxidoreductase. Together with the diflavin oxidoreductase, also required for the assembly of the diferric tyrosyl radical cofactor of ribonucleotide reductase (RNR), probably by providing electrons for reduction during radical cofactor maturation in the catalytic small subunit. This chain is Anamorsin homolog, found in Aedes aegypti (Yellowfever mosquito).